Reading from the N-terminus, the 137-residue chain is Basic phospholipase A2 homolog 4a (137 aa).

An N-terminal signal peptide occupies residues 1–16; sequence MRTLWIVTVLLVGVEG. 7 cysteine pairs are disulfide-bonded: Cys-42–Cys-131, Cys-44–Cys-60, Cys-59–Cys-111, Cys-65–Cys-137, Cys-66–Cys-104, Cys-73–Cys-97, and Cys-91–Cys-102. Residues 121–133 are important for membrane-damaging activities in eukaryotes and bacteria; heparin-binding; it reads KKYKIYPKFFCKK.

The protein belongs to the phospholipase A2 family. Group II subfamily. K49 sub-subfamily. Homodimer; non-covalently linked. Expressed by the venom gland.

It localises to the secreted. Functionally, snake venom phospholipase A2 homolog that lacks enzymatic activity. Is myotoxic and displays edema-inducing activities. A model of myotoxic mechanism has been proposed: an apo Lys49-PLA2 is activated by the entrance of a hydrophobic molecule (e.g. fatty acid) at the hydrophobic channel of the protein leading to a reorientation of a monomer. This reorientation causes a transition between 'inactive' to 'active' states, causing alignment of C-terminal and membrane-docking sites (MDoS) side-by-side and putting the membrane-disruption sites (MDiS) in the same plane, exposed to solvent and in a symmetric position for both monomers. The MDoS region stabilizes the toxin on membrane by the interaction of charged residues with phospholipid head groups. Subsequently, the MDiS region destabilizes the membrane with penetration of hydrophobic residues. This insertion causes a disorganization of the membrane, allowing an uncontrolled influx of ions (i.e. calcium and sodium), and eventually triggering irreversible intracellular alterations and cell death. This Bothrops asper (Terciopelo) protein is Basic phospholipase A2 homolog 4a.